Here is a 225-residue protein sequence, read N- to C-terminus: C-reactive protein (225 aa).

An N-terminal signal peptide occupies residues 1–20 (MEKLLWCFLTLVSFSNMSDQ). The Pentraxin (PTX) domain occupies 24 to 225 (HKKAFVFPKE…EVHVKPQLWP (202 aa)). Cysteines 55 and 116 form a disulfide. Residues Asn80, Gln158, Asp159, and Gln169 each contribute to the Ca(2+) site.

Belongs to the pentraxin family. As to quaternary structure, homopentamer. Pentraxin (or pentaxin) have a discoid arrangement of 5 non-covalently bound subunits. Interacts with FCN1; may regulate monocyte activation by FCN1. It depends on Ca(2+) as a cofactor. In terms of tissue distribution, found in plasma.

The protein localises to the secreted. Functionally, displays several functions associated with host defense: it promotes agglutination, bacterial capsular swelling, phagocytosis and complement fixation through its calcium-dependent binding to phosphorylcholine. Can interact with DNA and histones and may scavenge nuclear material released from damaged circulating cells. In Oryctolagus cuniculus (Rabbit), this protein is C-reactive protein (CRP).